The chain runs to 383 residues: MSPTLALTEDLIRRRSVTPEDKGCQDVLIERLSAAGFQCETVVSGPDHFRVTNLWAVKRGRAGTDGKLLVFAGHTDVVPTGPVEQWRSDPFEPTHRDGKLYGRGAADMKTSIAGFVVAAEEFVAVHPDHAGSIGFLITSDEEGPAHDGTIKVCDLLRTRGERLDYCVVGEPTSVSTLGDMVKNGRRGSLSGKLTVNGVQGHIAYPHLAKNPIHLAVPALTALAAEQWDDGNAYFPPTTWQMSNIHGGTGATNVIPGHVIIDFNFRFSTASTPEGLKSRVHAILDAHGLDYTLAWTLGGEPFLTERGELSEALSSAIGAECGVATELSTTGGTSDGRFIAKLCPQVIEFGPPNASIHKIDEHVDVAFIEPLKNVYRRVLETLIA.

His74 is a Zn(2+) binding site. Residue Asp76 is part of the active site. Residue Asp107 participates in Zn(2+) binding. The active-site Proton acceptor is Glu141. Zn(2+) is bound by residues Glu142, Glu170, and His356.

This sequence belongs to the peptidase M20A family. DapE subfamily. In terms of assembly, homodimer. The cofactor is Zn(2+). Requires Co(2+) as cofactor.

It carries out the reaction N-succinyl-(2S,6S)-2,6-diaminopimelate + H2O = (2S,6S)-2,6-diaminopimelate + succinate. Its pathway is amino-acid biosynthesis; L-lysine biosynthesis via DAP pathway; LL-2,6-diaminopimelate from (S)-tetrahydrodipicolinate (succinylase route): step 3/3. In terms of biological role, catalyzes the hydrolysis of N-succinyl-L,L-diaminopimelic acid (SDAP), forming succinate and LL-2,6-diaminopimelate (DAP), an intermediate involved in the bacterial biosynthesis of lysine and meso-diaminopimelic acid, an essential component of bacterial cell walls. This Ralstonia nicotianae (strain ATCC BAA-1114 / GMI1000) (Ralstonia solanacearum) protein is Succinyl-diaminopimelate desuccinylase.